An 81-amino-acid polypeptide reads, in one-letter code: Apolipoprotein C-I, acidic form (81 aa).

The first 24 residues, 1-24 (MRLFLSLLVVVLSIVLEGPTPAQG), serve as a signal peptide directing secretion.

Belongs to the apolipoprotein C1 family.

It localises to the secreted. This is Apolipoprotein C-I, acidic form (APOC1A) from Cercocebus atys (Sooty mangabey).